The sequence spans 533 residues: Na(+)/H(+) antiporter NhaB (533 aa).

11 helical membrane passes run 10–30 (IGNF…SFLI), 67–87 (PGGL…SQVL), 96–116 (VLLL…LLLF), 131–165 (VSLL…FYSI), 209–229 (LLMH…VGEP), 247–267 (IRMS…CYIV), 310–330 (AFIG…VGLI), 355–375 (EEAL…AVII), 396–416 (LVIF…VFVG), 454–474 (ATPN…APLI), and 485–505 (ALPY…IGFL).

The protein belongs to the NhaB Na(+)/H(+) (TC 2.A.34) antiporter family.

It is found in the cell inner membrane. The enzyme catalyses 2 Na(+)(in) + 3 H(+)(out) = 2 Na(+)(out) + 3 H(+)(in). Its function is as follows. Na(+)/H(+) antiporter that extrudes sodium in exchange for external protons. This chain is Na(+)/H(+) antiporter NhaB, found in Shewanella oneidensis (strain ATCC 700550 / JCM 31522 / CIP 106686 / LMG 19005 / NCIMB 14063 / MR-1).